Here is a 139-residue protein sequence, read N- to C-terminus: Translation initiation factor 2 subunit beta (139 aa).

It belongs to the eIF-2-beta/eIF-5 family. As to quaternary structure, heterotrimer composed of an alpha, a beta and a gamma chain.

Functionally, eIF-2 functions in the early steps of protein synthesis by forming a ternary complex with GTP and initiator tRNA. The protein is Translation initiation factor 2 subunit beta of Methanococcus aeolicus (strain ATCC BAA-1280 / DSM 17508 / OCM 812 / Nankai-3).